The primary structure comprises 290 residues: Concanavalin-A (290 aa).

An N-terminal signal peptide occupies residues 1-29 (MAISKKSSLFLPIFTFITMFLMVVNKVSS). A carbohydrate-binding residues include D119 and R139. D119 lines the Ca(2+) pocket. Positions 149–163 (VIRNSTTIDFNAAYN) are excised as a propeptide. An N-linked (GlcNAc...) asparagine glycan is attached at N152. Mn(2+) contacts are provided by E171 and D173. The Ca(2+) site is built by D173, Y175, N177, and D182. Mn(2+) is bound by residues D182 and H187. 262–263 (LY) is an a carbohydrate binding site. A propeptide spanning residues 282–290 (EIPDIATVV) is cleaved from the precursor.

Belongs to the leguminous lectin family. As to quaternary structure, homotetramer. In terms of processing, the mature chain consists of residues 164-281 followed by 30-148. To form a mature chain the precursor undergoes further post-translational modification after removal of the signal sequence; cleavage after Asn at positions Asn-148, Asn-163, and Asn-281 is followed by transposition and ligation (By formation of a new peptide bond) of residues 164-281 and 30-148.

Glucose/D-mannose/rhamnose specific lectin. Has hemagglutinating activity towards rabbit erythrocytes. Has mitogenic activity towards murine splenocytes that is inhibited by glucose. Inhibits HIV-1 reverse transcriptase with an IC(50) of 35 uM. Has a potent antiproliferative activity against L1210 leukemia cells in vitro that is not inhibited by glucose. Inhibits translation in cell-free rabbit reticulocyte system with an IC(50) of 2.08 uM. Lacks anti-fungal activity against M.arachidicola, B.cenera and F.oxysporum. The chain is Concanavalin-A from Canavalia gladiata (Sword bean).